The sequence spans 371 residues: 4-hydroxy-3-methylbut-2-en-1-yl diphosphate synthase (flavodoxin) (371 aa).

4 residues coordinate [4Fe-4S] cluster: C268, C271, C303, and E310.

The protein belongs to the IspG family. [4Fe-4S] cluster is required as a cofactor.

It catalyses the reaction (2E)-4-hydroxy-3-methylbut-2-enyl diphosphate + oxidized [flavodoxin] + H2O + 2 H(+) = 2-C-methyl-D-erythritol 2,4-cyclic diphosphate + reduced [flavodoxin]. Its pathway is isoprenoid biosynthesis; isopentenyl diphosphate biosynthesis via DXP pathway; isopentenyl diphosphate from 1-deoxy-D-xylulose 5-phosphate: step 5/6. Converts 2C-methyl-D-erythritol 2,4-cyclodiphosphate (ME-2,4cPP) into 1-hydroxy-2-methyl-2-(E)-butenyl 4-diphosphate. In Lysinibacillus sphaericus (strain C3-41), this protein is 4-hydroxy-3-methylbut-2-en-1-yl diphosphate synthase (flavodoxin).